Here is a 217-residue protein sequence, read N- to C-terminus: Translation initiation factor IF-3 (217 aa).

The segment at 185–217 (YNLPETETTRIREENREKQKEKENTSKEGNKDA) is disordered. Residues 191 to 217 (ETTRIREENREKQKEKENTSKEGNKDA) are compositionally biased toward basic and acidic residues.

Belongs to the IF-3 family. In terms of assembly, monomer.

The protein localises to the cytoplasm. Functionally, IF-3 binds to the 30S ribosomal subunit and shifts the equilibrium between 70S ribosomes and their 50S and 30S subunits in favor of the free subunits, thus enhancing the availability of 30S subunits on which protein synthesis initiation begins. This Methylacidiphilum infernorum (isolate V4) (Methylokorus infernorum (strain V4)) protein is Translation initiation factor IF-3.